Reading from the N-terminus, the 323-residue chain is Probable inactive poly [ADP-ribose] polymerase SRO2 (323 aa).

The 227-residue stretch at 31-257 (SSVSHAGSSF…FASRPSSPWV (227 aa)) folds into the PARP catalytic domain. The 72-residue stretch at 250–321 (SRPSSPWVSF…IKNHKNRNKV (72 aa)) folds into the RST domain.

In terms of assembly, interacts with STO.

Its subcellular location is the nucleus. In terms of biological role, probable inactive ADP-ribosyltransferase that may be involved in stress and developmental responses. This is Probable inactive poly [ADP-ribose] polymerase SRO2 (SRO2) from Arabidopsis thaliana (Mouse-ear cress).